A 341-amino-acid chain; its full sequence is DNA-directed RNA polymerase subunit alpha (341 aa).

Positions 1-237 (MLSLSKNWNA…EQLQLFISFE (237 aa)) are alpha N-terminal domain (alpha-NTD). Residues 252–341 (FSPYLLKRVD…LSKRYEDSYN (90 aa)) are alpha C-terminal domain (alpha-CTD).

The protein belongs to the RNA polymerase alpha chain family. In terms of assembly, homodimer. The RNAP catalytic core consists of 2 alpha, 1 beta, 1 beta' and 1 omega subunit. When a sigma factor is associated with the core the holoenzyme is formed, which can initiate transcription.

It catalyses the reaction RNA(n) + a ribonucleoside 5'-triphosphate = RNA(n+1) + diphosphate. Its function is as follows. DNA-dependent RNA polymerase catalyzes the transcription of DNA into RNA using the four ribonucleoside triphosphates as substrates. The chain is DNA-directed RNA polymerase subunit alpha from Rickettsia bellii (strain OSU 85-389).